Reading from the N-terminus, the 154-residue chain is Pseudo histidine-containing phosphotransfer protein 6 (154 aa).

Met-1 is subject to N-acetylmethionine. The HPt domain maps to 41–137 (SPNFVYDVIN…HYLKNMMHEL (97 aa)).

As to quaternary structure, interacts with AHK5.

The protein resides in the cytoplasm. The protein localises to the cytosol. It is found in the nucleus. Functions as a two-component phosphorelay mediator between cytokinin sensor histidine kinases and response regulators (B-type ARRs). Plays an important role in propagating cytokinin signal transduction. The sequence is that of Pseudo histidine-containing phosphotransfer protein 6 (AHP6) from Arabidopsis thaliana (Mouse-ear cress).